A 396-amino-acid chain; its full sequence is uncharacterized protein (396 aa).

Residues Cys8, Cys14, Cys17, and Cys95 each contribute to the [4Fe-4S] cluster site. Residues Gln229, Tyr258, Glu279, and Asp325 each contribute to the S-adenosyl-L-methionine site. Cys352 functions as the Nucleophile in the catalytic mechanism.

The protein belongs to the class I-like SAM-binding methyltransferase superfamily. RNA M5U methyltransferase family.

This is an uncharacterized protein from Chlamydia trachomatis serovar D (strain ATCC VR-885 / DSM 19411 / UW-3/Cx).